Here is a 284-residue protein sequence, read N- to C-terminus: NAD kinase (284 aa).

The active-site Proton acceptor is the Asp60. Residues 60–61, 134–135, Arg145, Lys162, Asp164, 175–180, and Gln234 each bind NAD(+); these read DG, ND, and TAYSFS.

Belongs to the NAD kinase family. Requires a divalent metal cation as cofactor.

The protein localises to the cytoplasm. The catalysed reaction is NAD(+) + ATP = ADP + NADP(+) + H(+). In terms of biological role, involved in the regulation of the intracellular balance of NAD and NADP, and is a key enzyme in the biosynthesis of NADP. Catalyzes specifically the phosphorylation on 2'-hydroxyl of the adenosine moiety of NAD to yield NADP. The chain is NAD kinase from Clostridium beijerinckii (strain ATCC 51743 / NCIMB 8052) (Clostridium acetobutylicum).